Here is an 837-residue protein sequence, read N- to C-terminus: Espin (837 aa).

9 ANK repeats span residues 1–31 (MALEQAMQAARRGDLDVLRSLHAAGLLGPSL), 35–66 (LDALPVHHAARSGKLHCLRYLVEEVALPAVSR), 69–99 (NGATPAHDAAATGYLSCLQWLLTQGGCRVQE), 103–132 (SGATVLHLAARFGHPDVVNWLLYQGGANSA), 137–167 (TGALPIHYAAAKGDLPSMKLLVGHYPEGVNA), 171–201 (NGATPLYLACQEGHLEVTKYLVQECSADPHL), 205–235 (DGMTPLHAAAQMGHNPVLVWLVSFADVSFEQ), 238–267 (DGATAMHFAASRGHTKVLSWLLLHGAEISQ), and 270–299 (WGGTPLHDAAENGELECCQILAVNGAGLDV). Residues serine 337 and serine 341 each carry the phosphoserine modification. Basic and acidic residues predominate over residues 339–348 (DPSMDLEAKQ). Disordered stretches follow at residues 339–459 (DPSM…VGLH), 477–712 (DSLK…PATL), 745–767 (KLQQKMQEEEEQRRKEEEEEARL), and 785–816 (EREQKRKEEERQKLEEIQRAKEQSEKLRTLGY). Residues 351–364 (SGMSSPNTTMSVQP) are compositionally biased toward polar residues. Residues 376–395 (LSNYDSCSSSHSSSKGQRST) are compositionally biased toward low complexity. Phosphoserine is present on residues serine 400 and serine 401. The span at 423–455 (SLPPPPPPSFPPPPPPGTQLPPPPPGYPAPNPP) shows a compositional bias: pro residues. Serine 497, serine 504, and serine 531 each carry phosphoserine. Pro residues predominate over residues 581–604 (LPPPPPPPPLPEALSSPPPAPPLP). The span at 617-626 (SSSSTGSTKS) shows a compositional bias: low complexity. 2 stretches are compositionally biased toward polar residues: residues 627–636 (FNMMSPTGDN) and 651–662 (PTPQSKGLTTVF). The residue at position 631 (serine 631) is a Phosphoserine. Residues 635–652 (DNSELLAEIKAGKSLKPT) form the WH2 domain. The segment covering 663–673 (SGSGQPASQPE) has biased composition (low complexity). Phosphoserine occurs at positions 670, 674, and 680. A coiled-coil region spans residues 738–814 (KRQVMVRKLQ…KEQSEKLRTL (77 aa)).

Monomer. Interacts with PFN2. Binds F-actin in a Ca(2+)-resistant fashion. Interacts (via N-terminal) with BAIAP2 (via SH3-domain). Interacts with MYO3A (via C-terminus). Interacts with MYO3B (via C-terminus). Expressed at high concentration in the microvillar parallel actin bundle (PAB) of hair cells stereocilia in the cochlea and vestibular system. Detected also at high levels of a number of other sensory cell types, including taste receptor cells, solitary chemoreceptor cells, vomeronasal sensory neurons and Merkel cells. Isoform 1 is detected in testis. Isoforms 2 is detected in small intestine and kidney (at protein level). Isoforms 3, 4, 6 and 8 are expressed in Purkinje cells dendritic spines.

It is found in the cytoplasm. It localises to the cytoskeleton. The protein resides in the cell projection. The protein localises to the stereocilium. Its subcellular location is the microvillus. It is found in the cell junction. It localises to the dendritic spine. Its function is as follows. Multifunctional actin-bundling protein. Plays a major role in regulating the organization, dimension, dynamics and signaling capacities of the actin filament-rich microvilli in the mechanosensory and chemosensory cells. Required for the assembly and stabilization of the stereociliary parallel actin bundles. Plays a crucial role in the formation and maintenance of inner ear hair cell stereocilia. Involved in the elongation of actin in stereocilia. In extrastriolar hair cells, required for targeting MYO3B to stereocilia tips, and for regulation of stereocilia diameter and staircase formation. The protein is Espin (Espn) of Rattus norvegicus (Rat).